A 204-amino-acid polypeptide reads, in one-letter code: Methyl-CpG-binding domain-containing protein 1 (204 aa).

A disordered region spans residues 1–46 (MLPFPAMNLKKSRSENSSVASSGSKIEEQTEKSAEPTTIKVQKKAG). Positions 15–24 (ENSSVASSGS) are enriched in polar residues. The span at 25 to 34 (KIEEQTEKSA) shows a compositional bias: basic and acidic residues. Residues 49–104 (GRSIDVFAVQCEKCMKWRKIDTQDEYEDIRSRVQEDPFFCKTKEGVSCEDVGDLNY) form a CW-type zinc finger. Positions 58–96 (QCEKCMKWRKIDTQDEYEDIRSRVQEDPFFCKTKEGVSC) match the MBD-associated domain (MAD) motif. 4 residues coordinate Zn(2+): Cys59, Cys62, Cys88, and Cys96. One can recognise an MBD domain in the interval 110–180 (WVIDKPGLPR…GDFNFTVPKV (71 aa)).

Mostly expressed in flowers and buds.

The protein resides in the nucleus. Functionally, probable transcriptional regulator. The polypeptide is Methyl-CpG-binding domain-containing protein 1 (MBD1) (Arabidopsis thaliana (Mouse-ear cress)).